A 281-amino-acid polypeptide reads, in one-letter code: D-arabinitol 2-dehydrogenase [ribulose-forming] (281 aa).

Leucine 31 and asparagine 52 together coordinate NADP(+). The active-site Proton donor is the serine 169. The NADP(+) site is built by tyrosine 184, lysine 188, isoleucine 217, and threonine 219. Tyrosine 184 acts as the Proton acceptor in catalysis. Lysine 188 functions as the Lowers pKa of active site Tyr in the catalytic mechanism.

It belongs to the short-chain dehydrogenases/reductases (SDR) family.

It carries out the reaction D-arabinitol + NAD(+) = D-ribulose + NADH + H(+). It participates in carbohydrate metabolism; D-arabinitol metabolism. The sequence is that of D-arabinitol 2-dehydrogenase [ribulose-forming] (ARD1) from Candida albicans (strain WO-1) (Yeast).